The chain runs to 842 residues: Amyloid-beta A4 precursor protein-binding family A member 1 (842 aa).

Disordered stretches follow at residues 1–121 (MNHL…DESA), 238–349 (RLHH…EKRD), and 366–439 (KTRT…KESR). Serine 82 carries the phosphoserine modification. Basic and acidic residues-rich tracts occupy residues 106–115 (DGYEAERAQD) and 240–258 (HHYDERSDGESDSPEKEAE). A phosphoserine mark is found at serine 246, serine 250, serine 252, serine 267, serine 284, and serine 289. Threonine 309 carries the post-translational modification Phosphothreonine. Serine 317 and serine 372 each carry phosphoserine. Threonine 375 is subject to Phosphothreonine. Residues 392 to 403 (PTRDCDDQRPVD) are compositionally biased toward basic and acidic residues. The span at 404-421 (GDSPSPGSSSPLGAESSS) shows a compositional bias: low complexity. Phosphoserine is present on residues serine 406, serine 408, serine 413, and serine 573. Residues 460–648 (LIDGIIFAAN…LLNTQDMYND (189 aa)) form the PID domain. The tract at residues 631 to 648 (LSQKEYSDLLNTQDMYND) is autoinhibitory helix linker. PDZ domains lie at 661–746 (DVFI…NIVR) and 752–828 (TVLI…MPAA).

Part of a multimeric complex containing STXBP1 and STX1A. Interacts with STXBP1. Component of the brain-specific heterotrimeric complex (LIN-10-LIN-2-LIN-7 complex) composed of at least APBA1, CASK, and LIN7, which associates with the motor protein KIF17 to transport vesicles along microtubules. Within the complex, interacts (via PDZ domain) with the motor protein KIF17; the interaction is direct and is required for association of KIF17 with the cargo that is to be transported. Binds to the cytoplasmic domain of amyloid protein (APP). Interacts (via PDZ 1 and 2 domains) with FSPB. Isoform 3 interacts (via its truncated PID domain) with active, GTP-bound RAB6A. Also interacts with GTP-bound RAB6B. Isoform 3 is expressed in brain.

The protein localises to the cytoplasm. It localises to the perinuclear region. Its subcellular location is the nucleus. It is found in the golgi apparatus. Functionally, putative function in synaptic vesicle exocytosis by binding to Munc18-1, an essential component of the synaptic vesicle exocytotic machinery. May modulate processing of the amyloid-beta precursor protein (APP) and hence formation of AAP-beta. Component of the LIN-10-LIN-2-LIN-7 complex, which associates with the motor protein KIF17 to transport vesicles containing N-methyl-D-aspartate (NMDA) receptor subunit NR2B along microtubules. The sequence is that of Amyloid-beta A4 precursor protein-binding family A member 1 from Mus musculus (Mouse).